We begin with the raw amino-acid sequence, 377 residues long: Unsaturated 3S-rhamnoglycuronyl hydrolase (377 aa).

The signal sequence occupies residues 1-25 (MKNQALKILTLCVLVGSAMSLKLYA). The active-site Proton donor is the Asp-161.

This sequence belongs to the glycosyl hydrolase 105 family.

The protein localises to the periplasm. In terms of biological role, unsaturated beta-glucuronyl hydrolase involved in ulvan degradation. Ulvan is the main polysaccharide component of the Ulvales (green seaweed) cell wall. It is composed of disaccharide building blocks comprising 3-sulfated rhamnose (Rha3S) linked to D-glucuronic acid (GlcA), L-iduronic acid (IduA), or D-xylose (Xyl). Unsaturated 3S-rhamnoglycuronyl hydrolase works together with ulvan lyases to fully degrade the ulvan polymer, catalyzing specifically the cleavage of the unsaturated 4-deoxy-L-threo-hex-4-enopyranosiduronic acid (deltaUA) of deltaUA-Rha3S disaccharides and deltaUA-Rha3S-Xyl-Rha3S tetrasaccharides, the end products of the ulvan lyase reaction. Also hydrolases deltaUA-Rha3S-IduA-Rha3S and deltaUA-Rha3S-GlcA-Rha3S tetrasaccharidestetrasaccharides. Prefers tetrasaccharides over disaccharides and prefers an uronic residue at subsite +2. In Formosa agariphila (strain DSM 15362 / KCTC 12365 / LMG 23005 / KMM 3901 / M-2Alg 35-1), this protein is Unsaturated 3S-rhamnoglycuronyl hydrolase.